The following is a 532-amino-acid chain: Invertase 1 (532 aa).

The N-terminal stretch at 1–19 is a signal peptide; sequence MLLQAFLFLLAGFAAKISA. An N-linked (GlcNAc...) asparagine glycan is attached at Asn23. Residues 39–42 and Gln60 each bind substrate; that span reads WMND. The active site involves Asp42. Asn64 is a glycosylation site (N-linked (GlcNAc...) asparagine). 102–103 is a binding site for substrate; sequence YS. 4 N-linked (GlcNAc...) asparagine glycosylation sites follow: Asn111, Asn112, Asn118, and Asn165. Residues 170–171 and Glu223 each bind substrate; that span reads RD. N-linked (GlcNAc...) asparagine glycosylation occurs at Asn275. A substrate-binding site is contributed by Trp311. N-linked (GlcNAc...) asparagine glycans are attached at residues Asn356, Asn369, Asn384, Asn398, and Asn512.

It belongs to the glycosyl hydrolase 32 family. In terms of processing, isoform Secreted is glycosylated. Isoform Intracellular is not glycosylated.

It is found in the cytoplasm. It localises to the secreted. The catalysed reaction is Hydrolysis of terminal non-reducing beta-D-fructofuranoside residues in beta-D-fructofuranosides.. This chain is Invertase 1 (SUC1), found in Saccharomyces cerevisiae (Baker's yeast).